The sequence spans 397 residues: DNA replication and repair protein RecF (397 aa).

30-37 serves as a coordination point for ATP; the sequence is GPNGQGKT.

This sequence belongs to the RecF family.

The protein localises to the cytoplasm. Functionally, the RecF protein is involved in DNA metabolism; it is required for DNA replication and normal SOS inducibility. RecF binds preferentially to single-stranded, linear DNA. It also seems to bind ATP. In Beutenbergia cavernae (strain ATCC BAA-8 / DSM 12333 / CCUG 43141 / JCM 11478 / NBRC 16432 / NCIMB 13614 / HKI 0122), this protein is DNA replication and repair protein RecF.